Consider the following 415-residue polypeptide: Corticotropin-releasing factor receptor 1 (415 aa).

An N-terminal signal peptide occupies residues 1 to 23; the sequence is MGQRPQLRLVKALLLLGLNPVST. Over 24–111 the chain is Extracellular; it reads SLQDQQCESL…CQEILNEEKK (88 aa). Intrachain disulfides connect Cys30/Cys54, Cys44/Cys87, and Cys68/Cys102. Asn38, Asn45, Asn78, Asn90, and Asn98 each carry an N-linked (GlcNAc...) asparagine glycan. Positions 99-108 are important for peptide agonist binding; sequence YSECQEILNE. A helical membrane pass occupies residues 112–142; the sequence is SKVHYHIAVIINYLGHCISLVALLVAFVLFL. Residues 143-149 lie on the Cytoplasmic side of the membrane; it reads RLRSIRC. A helical transmembrane segment spans residues 150-174; the sequence is LRNIIHWNLISAFILRNATWFVVQL. Residues 175–189 lie on the Extracellular side of the membrane; that stretch reads TVSPEVHQSNVAWCR. Residues Cys188 and Cys258 are joined by a disulfide bond. Residues 190–218 traverse the membrane as a helical segment; it reads LVTAAYNYFHVTNFFWMFGEGCYLHTAIV. Residues 219-225 lie on the Cytoplasmic side of the membrane; that stretch reads LTYSTDR. Residues 226–253 form a helical membrane-spanning segment; sequence LRKWMFVCIGWGVPFPIIVAWAIGKLYY. Residues 254 to 269 are Extracellular-facing; it reads DNEKCWFGKRPGVYTD. A helical transmembrane segment spans residues 270–295; the sequence is YIYQGPMILVLLINFIFLFNIVRILM. Residues 280–290 are important for antagonist binding; it reads LLINFIFLFNI. Residues 296-306 are Cytoplasmic-facing; the sequence is TKLRASTTSET. Residue Ser301 is modified to Phosphoserine; by PKA. The helical transmembrane segment at 307–331 threads the bilayer; it reads IQYRKAVKATLVLLPLLGITYMLFF. The Extracellular segment spans residues 332 to 338; sequence VNPGEDE. A helical membrane pass occupies residues 339–368; it reads VSRVVFIYFNSFLESFQGFFVSVFYCFLNS. The Cytoplasmic portion of the chain corresponds to 369–415; sequence EVRSAIRKRWRRWQDKHSIRARVARAMSIPTSPTRVSFHSIKQSTAV.

Belongs to the G-protein coupled receptor 2 family. As to quaternary structure, heterodimer; heterodimerizes with GPER1. Interacts (via N-terminal extracellular domain) with CRH and UCN. Interacts with DLG1; this inhibits endocytosis of CRHR1 after agonist binding. Post-translationally, C-terminal Ser or Thr residues may be phosphorylated. In terms of processing, phosphorylation at Ser-301 by PKA prevents maximal coupling to Gq-protein, and thereby negatively regulates downstream signaling. In terms of tissue distribution, detected in brain cortex (at protein level).

It localises to the cell membrane. The protein localises to the endosome. In terms of biological role, G-protein coupled receptor for CRH (corticotropin-releasing factor) and UCN (urocortin). Has high affinity for CRH and UCN. Ligand binding causes a conformation change that triggers signaling via guanine nucleotide-binding proteins (G proteins) and down-stream effectors, such as adenylate cyclase. Promotes the activation of adenylate cyclase, leading to increased intracellular cAMP levels. Inhibits the activity of the calcium channel CACNA1H. Required for normal embryonic development of the adrenal gland and for normal hormonal responses to stress. Plays a role in the response to anxiogenic stimuli. In Mus musculus (Mouse), this protein is Corticotropin-releasing factor receptor 1 (Crhr1).